Here is a 128-residue protein sequence, read N- to C-terminus: Fluoride-specific ion channel FluC (128 aa).

The next 4 membrane-spanning stretches (helical) occupy residues 4-24 (VFLL…VSTW), 35-55 (FGIL…WSIA), 67-87 (FLFT…LDTM), and 99-119 (LLNV…GIIL). Na(+)-binding residues include Gly74 and Thr77.

The protein belongs to the fluoride channel Fluc/FEX (TC 1.A.43) family.

The protein localises to the cell inner membrane. It carries out the reaction fluoride(in) = fluoride(out). Its activity is regulated as follows. Na(+) is not transported, but it plays an essential structural role and its presence is essential for fluoride channel function. Functionally, fluoride-specific ion channel. Important for reducing fluoride concentration in the cell, thus reducing its toxicity. The protein is Fluoride-specific ion channel FluC of Parabacteroides distasonis (strain ATCC 8503 / DSM 20701 / CIP 104284 / JCM 5825 / NCTC 11152).